The chain runs to 381 residues: Beta-1,4-galactosyltransferase 5 (381 aa).

The Cytoplasmic segment spans residues methionine 1–serine 11. The chain crosses the membrane as a helical; Signal-anchor for type II membrane protein span at residues phenylalanine 12 to alanine 32. At proline 33–tyrosine 381 the chain is on the lumenal side. Residues asparagine 73, asparagine 82, and asparagine 120 are each glycosylated (N-linked (GlcNAc...) asparagine). A disulfide bridge links cysteine 106 with cysteine 151. UDP-alpha-D-galactose is bound by residues proline 162–arginine 166, phenylalanine 201–arginine 203, valine 228–aspartate 229, tyrosine 257, and tryptophan 289. The cysteines at positions 222 and 241 are disulfide-linked. Position 229 (aspartate 229) interacts with Mn(2+). Position 291-294 (glycine 291–aspartate 294) interacts with N-acetyl-D-glucosamine. Position 322 (histidine 322) interacts with Mn(2+). Histidine 322 to histidine 323 contributes to the UDP-alpha-D-galactose binding site. Arginine 333 is a binding site for N-acetyl-D-glucosamine. A glycan (N-linked (GlcNAc...) asparagine) is linked at asparagine 366.

The protein belongs to the glycosyltransferase 7 family. Mn(2+) is required as a cofactor.

It is found in the golgi apparatus. Its subcellular location is the golgi stack membrane. The enzyme catalyses a beta-D-glucosyl-(1&lt;-&gt;1')-N-acylsphing-4-enine + UDP-alpha-D-galactose = a beta-D-Gal-(1-&gt;4)-beta-D-Glc-(1&lt;-&gt;1)-Cer(d18:1(4E)) + UDP + H(+). The protein operates within protein modification; protein glycosylation. Its pathway is sphingolipid metabolism. Its function is as follows. Catalyzes the synthesis of lactosylceramide (LacCer) via the transfer of galactose from UDP-galactose to glucosylceramide (GlcCer). Required for proper patterning of the dorsoventral axis during embryogenesis through the regulation of BMP signaling. Plays a role in proteoglycan glycosylation that is required for BMP-dependent specification of the dorsoventral axis. The polypeptide is Beta-1,4-galactosyltransferase 5 (b4galt5) (Danio rerio (Zebrafish)).